Consider the following 392-residue polypeptide: Nicotinate phosphoribosyltransferase (392 aa).

Position 214 is a phosphohistidine; by autocatalysis (histidine 214).

This sequence belongs to the NAPRTase family. Post-translationally, transiently phosphorylated on a His residue during the reaction cycle. Phosphorylation strongly increases the affinity for substrates and increases the rate of nicotinate D-ribonucleotide production. Dephosphorylation regenerates the low-affinity form of the enzyme, leading to product release.

The catalysed reaction is nicotinate + 5-phospho-alpha-D-ribose 1-diphosphate + ATP + H2O = nicotinate beta-D-ribonucleotide + ADP + phosphate + diphosphate. It functions in the pathway cofactor biosynthesis; NAD(+) biosynthesis; nicotinate D-ribonucleotide from nicotinate: step 1/1. Catalyzes the synthesis of beta-nicotinate D-ribonucleotide from nicotinate and 5-phospho-D-ribose 1-phosphate at the expense of ATP. The polypeptide is Nicotinate phosphoribosyltransferase (Xanthomonas euvesicatoria pv. vesicatoria (strain 85-10) (Xanthomonas campestris pv. vesicatoria)).